Consider the following 201-residue polypeptide: MAQHDENVVWHAHPVTREAREHLQGHRGAVLWFTGLSGSGKSTVAGALEQALHQLGVSSYLLDGDNVRHGLCRDLGFSDDDRKENIRRVGEVARLMVDAGLVVLTAFISPHRAERQMVRDMLGEGRFIEVFVDTPLAICEARDPKGLYKKARAGELRNFTGIDAEYQVPLHADIHLDGEQLVTHLTRQLLDLLRQQDIIKP.

Position 35–42 (35–42 (GLSGSGKS)) interacts with ATP. S109 acts as the Phosphoserine intermediate in catalysis.

It belongs to the APS kinase family.

It carries out the reaction adenosine 5'-phosphosulfate + ATP = 3'-phosphoadenylyl sulfate + ADP + H(+). It participates in sulfur metabolism; hydrogen sulfide biosynthesis; sulfite from sulfate: step 2/3. Its function is as follows. Catalyzes the synthesis of activated sulfate. This Erwinia tasmaniensis (strain DSM 17950 / CFBP 7177 / CIP 109463 / NCPPB 4357 / Et1/99) protein is Adenylyl-sulfate kinase.